The chain runs to 170 residues: Flavodoxin (170 aa).

A Flavodoxin-like domain is found at 5-165; it reads IGLFYGTQTG…RIKSWVAQLK (161 aa).

The protein belongs to the flavodoxin family. FMN is required as a cofactor.

In terms of biological role, low-potential electron donor to a number of redox enzymes. The polypeptide is Flavodoxin (isiB) (Nostoc sp. (strain PCC 7120 / SAG 25.82 / UTEX 2576)).